Consider the following 359-residue polypeptide: Acidic skeletal organic matrix protein (359 aa).

The N-terminal stretch at 1–26 (MLAPRLAFVLLLSSYFGSILITSVES) is a signal peptide. Disordered stretches follow at residues 60-83 (FEEDDDDDDDEDNEESENEVEDFD) and 224-254 (SEAEDPEEVDDAKRAETGKDPICVDPDDPNE). A coiled-coil region spans residues 66–89 (DDDDEDNEESENEVEDFDDENALS).

As to expression, component of the acid-insoluble and acid-soluble organic matrix of the aragonitic skeleton (at protein level).

It localises to the secreted. This Acropora millepora (Staghorn coral) protein is Acidic skeletal organic matrix protein.